The following is a 1273-amino-acid chain: DNA-directed RNA polymerase subunit beta (1273 aa).

The tract at residues 1252–1273 (ADDQDLVVSSNDEEVSENDERS) is disordered.

It belongs to the RNA polymerase beta chain family. The RNAP catalytic core consists of 2 alpha, 1 beta, 1 beta' and 1 omega subunit. When a sigma factor is associated with the core the holoenzyme is formed, which can initiate transcription.

The catalysed reaction is RNA(n) + a ribonucleoside 5'-triphosphate = RNA(n+1) + diphosphate. Its function is as follows. DNA-dependent RNA polymerase catalyzes the transcription of DNA into RNA using the four ribonucleoside triphosphates as substrates. In Dehalococcoides mccartyi (strain CBDB1), this protein is DNA-directed RNA polymerase subunit beta.